A 318-amino-acid chain; its full sequence is Potassium channel subfamily K member 15 (318 aa).

Over 1-8 the chain is Cytoplasmic; sequence MRKQSART. The chain crosses the membrane as a helical span at residues 9 to 29; that stretch reads AALILCILSYLLVGAAVFDAL. Positions 80–101 form an intramembrane region, pore-forming; it reads FAGSFYFAITVITTIGYGHAAP. Residues 108–128 traverse the membrane as a helical segment; sequence VFCMFYALLGIPLTLVTFQSL. At 129-158 the chain is on the cytoplasmic side; sequence GERLNALVRCLLLAAKRCLGLRRPHVSAEN. Residues 159–179 traverse the membrane as a helical segment; it reads MVVAGLLLCAATLALGAAAFA. Positions 189-209 form an intramembrane region, pore-forming; that stretch reads AYYYCFITLTTIGFGDFVALQ. A helical transmembrane segment spans residues 223–243; it reads FSFLYILLGLTVIGAFLNLVV. Residues 244-318 are Cytoplasmic-facing; that stretch reads LRFLASAEAP…DRLRARRKSI (75 aa). The segment at 296–318 is disordered; the sequence is LSPEAVHDCHSSPDRLRARRKSI. The span at 300-311 shows a compositional bias: basic and acidic residues; the sequence is AVHDCHSSPDRL.

This sequence belongs to the two pore domain potassium channel (TC 1.A.1.8) family. In terms of assembly, heterodimer. Phosphorylated. Brain-specific. Highly expressed in auditory nuclei, in Purkinje cells and in olfactory bulb mitral cells.

It is found in the membrane. Probable potassium channel subunit. No channel activity observed in heterologous systems. May need to associate with another protein to form a functional channel. The protein is Potassium channel subfamily K member 15 (Kcnk15) of Rattus norvegicus (Rat).